The following is a 299-amino-acid chain: Oxygen-dependent coproporphyrinogen-III oxidase (299 aa).

Ser-92 contacts substrate. His-96 and His-106 together coordinate a divalent metal cation. His-106 serves as the catalytic Proton donor. A substrate-binding site is contributed by 108–110; that stretch reads NVR. A divalent metal cation is bound by residues His-145 and His-175. Positions 240-275 are important for dimerization; it reads YVEFNLVWDRGTLFGLQTGGRTESILMSMPPLVRWE. 258-260 serves as a coordination point for substrate; it reads GGR.

Belongs to the aerobic coproporphyrinogen-III oxidase family. Homodimer. Requires a divalent metal cation as cofactor.

The protein resides in the cytoplasm. The catalysed reaction is coproporphyrinogen III + O2 + 2 H(+) = protoporphyrinogen IX + 2 CO2 + 2 H2O. It functions in the pathway porphyrin-containing compound metabolism; protoporphyrin-IX biosynthesis; protoporphyrinogen-IX from coproporphyrinogen-III (O2 route): step 1/1. In terms of biological role, involved in the heme biosynthesis. Catalyzes the aerobic oxidative decarboxylation of propionate groups of rings A and B of coproporphyrinogen-III to yield the vinyl groups in protoporphyrinogen-IX. This chain is Oxygen-dependent coproporphyrinogen-III oxidase, found in Shigella dysenteriae serotype 1 (strain Sd197).